Here is a 210-residue protein sequence, read N- to C-terminus: Glutathione S-transferase P (210 aa).

One can recognise a GST N-terminal domain in the interval 2–81 (PPYTVVYFPV…HLGRTLGLYG (80 aa)). Tyr4 carries the phosphotyrosine; by EGFR modification. Residues Tyr8, Arg14, Trp39, Lys45, and 52 to 53 (QL) contribute to the glutathione site. Thr62 carries the post-translational modification Phosphothreonine. 65-66 (QS) provides a ligand contact to glutathione. The GST C-terminal domain occupies 83 to 204 (DQREAALVDM…ASPEHVNLPI (122 aa)). Lys103 and Lys116 each carry N6-succinyllysine. Lys128 is modified (N6-acetyllysine).

This sequence belongs to the GST superfamily. Pi family. As to quaternary structure, homodimer. Interacts with CDK5.

It localises to the cytoplasm. The protein resides in the mitochondrion. It is found in the nucleus. The catalysed reaction is RX + glutathione = an S-substituted glutathione + a halide anion + H(+). It catalyses the reaction prostaglandin J2 + glutathione = prostaglandin J2-S-(R)-glutathione. It carries out the reaction prostaglandin J2 + glutathione = prostaglandin J2-S-(S)-glutathione. The enzyme catalyses prostaglandin A2 + glutathione = prostaglandin A2-S-(S)-glutathione. The catalysed reaction is 11(S)-hydroxy-14(S),15(S)-epoxy-(5Z,8Z,12E)-eicosatrienoate + glutathione = (11S,15S)-dihydroxy-14(R)-S-glutathionyl-(5Z,8Z,12E)-eicosatrienoate. Its function is as follows. Conjugation of reduced glutathione to a wide number of exogenous and endogenous hydrophobic electrophiles. Involved in the formation of glutathione conjugates of both prostaglandin A2 (PGA2) and prostaglandin J2 (PGJ2). Participates in the formation of novel hepoxilin regioisomers. Negatively regulates CDK5 activity via p25/p35 translocation to prevent neurodegeneration. This chain is Glutathione S-transferase P (GSTP1), found in Pongo abelii (Sumatran orangutan).